We begin with the raw amino-acid sequence, 275 residues long: MKNTVTTFQKAKNNGEKLTMLTAYDYSTAKLIDESGINGILVGDSLGMVCLGYEDTLSVTMEDMIHHTRAVSRGVKNTLVVGDMPFMSYQSSVYDAVVNAGRLIKEGGATAVKLEGGATVIEQIKAIVNAQIPVMAHIGLTPQSINVFGGFKVQGKDEEKAQKLIEDAKKIEEAGAFAIVLECVPAKLAELITKAVSIPTIGIGAGAGCDGQILVYQDMLGMFSDMSPKFVKKFADVGELMKDGFKAYIKEVQEGTFPSKEHCFKIDESVLDKLY.

2 residues coordinate Mg(2+): Asp44 and Asp83. 3-methyl-2-oxobutanoate-binding positions include 44-45, Asp83, and Lys113; that span reads DS. Residue Glu115 coordinates Mg(2+). Glu182 serves as the catalytic Proton acceptor.

Belongs to the PanB family. Homodecamer; pentamer of dimers. Mg(2+) serves as cofactor.

It localises to the cytoplasm. The catalysed reaction is 3-methyl-2-oxobutanoate + (6R)-5,10-methylene-5,6,7,8-tetrahydrofolate + H2O = 2-dehydropantoate + (6S)-5,6,7,8-tetrahydrofolate. It participates in cofactor biosynthesis; (R)-pantothenate biosynthesis; (R)-pantoate from 3-methyl-2-oxobutanoate: step 1/2. In terms of biological role, catalyzes the reversible reaction in which hydroxymethyl group from 5,10-methylenetetrahydrofolate is transferred onto alpha-ketoisovalerate to form ketopantoate. The protein is 3-methyl-2-oxobutanoate hydroxymethyltransferase of Clostridium novyi (strain NT).